Reading from the N-terminus, the 215-residue chain is ER lumen protein-retaining receptor B (215 aa).

Transmembrane regions (helical) follow at residues 6–26, 55–77, 98–118, 120–140, 149–169, and 178–198; these read LAGD…IHTI, FVSL…IVWY, WFLV…FTFL, VLWT…LVLL, LTGQ…LNWI, and FVHW…ADFF.

Belongs to the ERD2 family.

Its subcellular location is the golgi apparatus membrane. It is found in the endoplasmic reticulum membrane. Determines the specificity of the luminal endoplasmic reticulum protein retention system. Required for the retro-transport of calreticulin-3 (CRT3) from the Golgi to the ER. Specifically required for elongation factor Tu receptor (EFR) function in response to the pathogen-associated molecular pattern (PAMP) elf18. The protein is ER lumen protein-retaining receptor B (ERD2B) of Arabidopsis thaliana (Mouse-ear cress).